Here is a 104-residue protein sequence, read N- to C-terminus: MNFRPLHDRVVVKRIDAEEKTAGGIIIPDTAKEKPSQGEIVAVGPGGRDEAGKLIPIDLKVGDRVLFGKWSGTEVKIDGKELLIMKESDIMGVITDVGAKKKAA.

The protein belongs to the GroES chaperonin family. In terms of assembly, heptamer of 7 subunits arranged in a ring. Interacts with the chaperonin GroEL.

Its subcellular location is the cytoplasm. Functionally, together with the chaperonin GroEL, plays an essential role in assisting protein folding. The GroEL-GroES system forms a nano-cage that allows encapsulation of the non-native substrate proteins and provides a physical environment optimized to promote and accelerate protein folding. GroES binds to the apical surface of the GroEL ring, thereby capping the opening of the GroEL channel. The polypeptide is Co-chaperonin GroES 2 (Rhodopseudomonas palustris (strain ATCC BAA-98 / CGA009)).